The following is a 309-amino-acid chain: Dicarboxylate carrier UCP2 (309 aa).

Over 1-16 the chain is Mitochondrial intermembrane; sequence MVGFKATDVPPTATVK. Solcar repeat units follow at residues 11 to 106, 114 to 203, and 212 to 297; these read PTAT…VKQF, AGIG…IKDA, and DDLP…LKRA. An important for interaction with long-chain fatty acids region spans residues 16–63; that stretch reads KFLGAGTAACIADLITFPLDTAKVRLQIQGERQGPVRAAASAQYRGVL. The chain crosses the membrane as a helical span at residues 17–40; sequence FLGAGTAACIADLITFPLDTAKVR. Residues 41–77 are Mitochondrial matrix-facing; sequence LQIQGERQGPVRAAASAQYRGVLCTILTMVRTEGPRS. A helical transmembrane segment spans residues 78–103; sequence LYSGLVAGLQRQMSFASVRIGLYDSV. The Mitochondrial intermembrane segment spans residues 104–119; it reads KQFYTKGSEHAGIGSR. The chain crosses the membrane as a helical span at residues 120-145; sequence LLAGSTTGALAVAVAQPTDVVKVRFQ. Topologically, residues 146–173 are mitochondrial matrix; it reads AQARAGSGRRYQSTVDAYKTIAREEGFR. A helical transmembrane segment spans residues 174-199; sequence GLWKGTSPNVARNAIVNCAELVTYDL. Topologically, residues 200-217 are mitochondrial intermembrane; the sequence is IKDALLKANLMTDDLPCH. The helical transmembrane segment at 218 to 242 threads the bilayer; sequence FTSAFGAGFCTTVIASPVDVVKTRY. Over 243-268 the chain is Mitochondrial matrix; the sequence is MNSALGQYSSAGHCALTMLQKEGPRA. The chain crosses the membrane as a helical span at residues 269–294; that stretch reads FYKGFMPSFLRLGSWNVVMFVTYEQL. Positions 278 to 285 are important for interaction with long-chain fatty acids; sequence LRLGSWNV. Residues 295 to 309 lie on the Mitochondrial intermembrane side of the membrane; it reads KRALMAACTSREAPF.

The protein belongs to the mitochondrial carrier (TC 2.A.29) family. As to quaternary structure, homotetramer. Adopts an asymmetrical dimer of dimers functional form. Interacts with MICU1 (when methylated); leading to decrease the calcium sensitivity of MICU1.

It localises to the mitochondrion inner membrane. The catalysed reaction is L-aspartate(out) + phosphate(in) + H(+)(in) = L-aspartate(in) + phosphate(out) + H(+)(out). The enzyme catalyses oxaloacetate(out) + phosphate(in) + H(+)(in) = oxaloacetate(in) + phosphate(out) + H(+)(out). It carries out the reaction (S)-malate(out) + phosphate(in) + H(+)(in) = (S)-malate(in) + phosphate(out) + H(+)(out). It catalyses the reaction malonate(out) + phosphate(in) + H(+)(in) = malonate(in) + phosphate(out) + H(+)(out). The catalysed reaction is sulfate(out) + phosphate(in) + H(+)(in) = sulfate(in) + phosphate(out) + H(+)(out). The enzyme catalyses (S)-malate(out) = (S)-malate(in). It carries out the reaction L-aspartate(out) = L-aspartate(in). It catalyses the reaction phosphate(in) = phosphate(out). The catalysed reaction is chloride(in) = chloride(out). The enzyme catalyses H(+)(in) = H(+)(out). It carries out the reaction a long-chain fatty acid(out) = a long-chain fatty acid(in). Its function is as follows. Antiporter that exports dicarboxylate intermediates of the Krebs cycle in exchange for phosphate plus a proton across the inner membrane of mitochondria, a process driven by mitochondrial motive force with an overall impact on glycolysis, glutaminolysis and glutathione-dependent redox balance. Continuous export of oxaloacetate and related four-carbon dicarboxylates from mitochondrial matrix into the cytosol negatively regulates the oxidation of acetyl-CoA substrates via the Krebs cycle lowering the ATP/ADP ratio and reactive oxygen species (ROS) production. May mediate inducible proton entry into the mitochondrial matrix affecting ATP turnover as a protection mechanism against oxidative stress. The proton currents are most likely associated with fatty acid flipping across the inner membrane of mitochondria in a metabolic process regulated by free fatty acids and purine nucleotides. Regulates the use of glucose as a source of energy. Required for glucose-induced DRP1-dependent mitochondrial fission and neuron activation in the ventromedial nucleus of the hypothalamus (VMH). This mitochondrial adaptation mechanism modulates the VMH pool of glucose-excited neurons with an impact on systemic glucose homeostasis. Regulates ROS levels and metabolic reprogramming of macrophages during the resolution phase of inflammation. Attenuates ROS production in response to IL33 to preserve the integrity of the Krebs cycle required for persistent production of itaconate and subsequent GATA3-dependent differentiation of inflammation-resolving alternatively activated macrophages. Can unidirectionally transport anions including L-malate, L-aspartate, phosphate and chloride ions. Does not mediate adaptive thermogenesis. The polypeptide is Dicarboxylate carrier UCP2 (UCP2) (Canis lupus familiaris (Dog)).